Reading from the N-terminus, the 160-residue chain is General odorant-binding protein 2 (160 aa).

Positions 1 to 19 (MGYKLLLMYIAIVIDSVIG) are cleaved as a signal peptide. Disulfide bonds link cysteine 38–cysteine 73, cysteine 69–cysteine 127, and cysteine 116–cysteine 136.

This sequence belongs to the PBP/GOBP family. In terms of tissue distribution, antenna.

In terms of biological role, present in the aqueous fluid surrounding olfactory sensory dendrites and are thought to aid in the capture and transport of hydrophobic odorants into and through this fluid. The protein is General odorant-binding protein 2 of Antheraea pernyi (Chinese oak silk moth).